A 627-amino-acid chain; its full sequence is Sodium- and chloride-dependent GABA transporter 3 (627 aa).

A disordered region spans residues 1–36; sequence MTAEQALPLGNGKAAEEARGSEALGGGGGGAAGTRE. At 1–53 the chain is on the cytoplasmic side; the sequence is MTAEQALPLGNGKAAEEARGSEALGGGGGGAAGTREARDKAVHERGHWNNKVE. Phosphoserine is present on Ser-21. Positions 23 to 32 are enriched in gly residues; sequence ALGGGGGGAA. 3 helical membrane-spanning segments follow: residues 54–74, 82–101, and 126–146; these read FVLS…FPYL, AFLI…VFFL, and GIGY…IIIL. Topologically, residues 147–220 are extracellular; that stretch reads AWAIFYLSNC…DGIEHIGNLR (74 aa). 3 N-linked (GlcNAc...) asparagine glycosylation sites follow: Asn-182, Asn-185, and Asn-193. 9 consecutive transmembrane segments (helical) span residues 221–239, 248–265, 301–318, 330–351, 384–403, 433–451, 468–488, 509–528, and 548–566; these read WELA…FCIW, VVYV…ILLI, IFFS…LGSY, IMLC…FSVL, MPLS…FLGL, LLIL…VMLT, GMCL…VYGS, WCWK…FFLV, and IGWL…WIFI. The Cytoplasmic portion of the chain corresponds to 567 to 627; it reads KLWKTEGTLP…SAITEKETHF (61 aa).

This sequence belongs to the sodium:neurotransmitter symporter (SNF) (TC 2.A.22) family. SLC6A11 subfamily. In terms of tissue distribution, brain and retina. Expressed predominantly within neurons. Expressed in the hippocampus (at protein level).

Its subcellular location is the cell membrane. It catalyses the reaction 4-aminobutanoate(out) + chloride(out) + 2 Na(+)(out) = 4-aminobutanoate(in) + chloride(in) + 2 Na(+)(in). The enzyme catalyses taurine(out) + chloride(out) + 2 Na(+)(out) = taurine(in) + chloride(in) + 2 Na(+)(in). The catalysed reaction is beta-alanine(out) + chloride(out) + 2 Na(+)(out) = beta-alanine(in) + chloride(in) + 2 Na(+)(in). It carries out the reaction hypotaurine(out) + chloride(out) + 2 Na(+)(out) = hypotaurine(in) + chloride(in) + 2 Na(+)(in). With respect to regulation, GABA transport is inhibited by beta-alanine. Functionally, mediates sodium- and chloride-dependent transport of gamma-aminobutyric acid (GABA). Can also mediate transport of beta-alanine and to a lower extent that of taurine and hypotaurine. In Rattus norvegicus (Rat), this protein is Sodium- and chloride-dependent GABA transporter 3 (Slc6a11).